The following is a 504-amino-acid chain: Cytochrome P450 2D10 (504 aa).

The O-linked (GlcNAc) serine glycan is linked to Ser382. Residue Cys446 participates in heme binding.

Belongs to the cytochrome P450 family. Heme serves as cofactor.

Its subcellular location is the endoplasmic reticulum membrane. The protein resides in the microsome membrane. It carries out the reaction an organic molecule + reduced [NADPH--hemoprotein reductase] + O2 = an alcohol + oxidized [NADPH--hemoprotein reductase] + H2O + H(+). In terms of biological role, cytochromes P450 are a group of heme-thiolate monooxygenases. In liver microsomes, this enzyme is involved in an NADPH-dependent electron transport pathway. It oxidizes a variety of structurally unrelated compounds, including steroids, fatty acids, and xenobiotics. This Rattus norvegicus (Rat) protein is Cytochrome P450 2D10 (Cyp2d10).